The primary structure comprises 419 residues: N-acylneuraminate cytidylyltransferase (419 aa).

The protein belongs to the CMP-NeuNAc synthase family. Monomer. May form aggregates. Mg(2+) is required as a cofactor. The cofactor is Mn(2+).

It localises to the cytoplasm. The catalysed reaction is an N-acylneuraminate + CTP = a CMP-N-acyl-beta-neuraminate + diphosphate. Its activity is regulated as follows. Inhibited by the CTP analogs 5-mercuri-CTP and CTP-2',3'-dialdehyde. Catalyzes the formation of CMP-N-acetylneuraminic acid (CMP-NeuNAc), which is essential for the formation of the capsule. This is N-acylneuraminate cytidylyltransferase (neuA) from Escherichia coli O18:K1:H7 (strain RS218 / NMEC).